Consider the following 428-residue polypeptide: Acylglycerol kinase, mitochondrial (428 aa).

The interval 18-34 (STVGFCLLAYGSHWLYG) is hydrophobic. A DAGKc domain is found at 61 to 202 (SAIKKATVFL…LDVLQIKGEQ (142 aa)).

This sequence belongs to the AGK family. Component of the TIM22 complex. The cofactor is Mg(2+).

The protein localises to the mitochondrion inner membrane. Its subcellular location is the mitochondrion intermembrane space. It carries out the reaction a monoacylglycerol + ATP = a monoacyl-sn-glycero-3-phosphate + ADP + H(+). The catalysed reaction is a 1,2-diacyl-sn-glycerol + ATP = a 1,2-diacyl-sn-glycero-3-phosphate + ADP + H(+). It catalyses the reaction an N-acylsphing-4-enine + ATP = an N-acylsphing-4-enine 1-phosphate + ADP + H(+). The enzyme catalyses 1-(9Z-octadecenoyl)-sn-glycerol + ATP = 1-(9Z-octadecenoyl)-sn-glycero-3-phosphate + ADP + H(+). It carries out the reaction 1,2-di-(9Z-octadecenoyl)-sn-glycerol + ATP = 1,2-di-(9Z-octadecenoyl)-sn-glycero-3-phosphate + ADP + H(+). The catalysed reaction is a 1-acyl-sn-glycerol + ATP = a 1-acyl-sn-glycero-3-phosphate + ADP + H(+). It catalyses the reaction 1-hexadecanoyl-sn-glycerol + ATP = 1-hexadecanoyl-sn-glycero-3-phosphate + ADP + H(+). The enzyme catalyses a 2-acylglycerol + ATP = a 2-acyl-sn-glycerol 3-phosphate + ADP + H(+). It carries out the reaction 2-(5Z,8Z,11Z,14Z-eicosatetraenoyl)-glycerol + ATP = 2-(5Z,8Z,11Z,14Z-eicosatetraenoyl)-sn-glycero-3-phosphate + ADP + H(+). The catalysed reaction is 1-(5Z,8Z,11Z,14Z-eicosatetraenoyl)-sn-glycerol + ATP = 1-(5Z,8Z,11Z,14Z-eicosatetraenoyl)-sn-glycero-3-phosphate + ADP + H(+). It catalyses the reaction N-(hexanoyl)sphing-4-enine + ATP = N-hexanoylsphing-4-enine 1-phosphate + ADP + H(+). Its pathway is lipid metabolism; glycerolipid metabolism. Lipid kinase that can phosphorylate both monoacylglycerol and diacylglycerol to form lysophosphatidic acid (LPA) and phosphatidic acid (PA), respectively. Phosphorylates ceramide but not sphingosine. Phosphorylates 1,2-dioleoylglycerol more rapidly than 2,3-dioleoylglycerol. Independently of its lipid kinase activity, acts as a component of the TIM22 complex. The TIM22 complex mediates the import and insertion of multi-pass transmembrane proteins into the mitochondrial inner membrane by forming a twin-pore translocase that uses the membrane potential as the external driving force. In Xenopus laevis (African clawed frog), this protein is Acylglycerol kinase, mitochondrial.